Here is a 1364-residue protein sequence, read N- to C-terminus: DNA-directed RNA polymerase subunit beta (1364 aa).

It belongs to the RNA polymerase beta chain family. In terms of assembly, the RNAP catalytic core consists of 2 alpha, 1 beta, 1 beta' and 1 omega subunit. When a sigma factor is associated with the core the holoenzyme is formed, which can initiate transcription.

The enzyme catalyses RNA(n) + a ribonucleoside 5'-triphosphate = RNA(n+1) + diphosphate. Functionally, DNA-dependent RNA polymerase catalyzes the transcription of DNA into RNA using the four ribonucleoside triphosphates as substrates. In Desulfatibacillum aliphaticivorans, this protein is DNA-directed RNA polymerase subunit beta.